Consider the following 654-residue polypeptide: Translation factor GUF1, mitochondrial (654 aa).

The region spanning glutamate 57–valine 237 is the tr-type G domain. GTP-binding positions include alanine 66 to serine 73, aspartate 130 to histidine 134, and asparagine 184 to aspartate 187.

It belongs to the TRAFAC class translation factor GTPase superfamily. Classic translation factor GTPase family. LepA subfamily.

It localises to the mitochondrion inner membrane. It catalyses the reaction GTP + H2O = GDP + phosphate + H(+). Its function is as follows. Promotes mitochondrial protein synthesis. May act as a fidelity factor of the translation reaction, by catalyzing a one-codon backward translocation of tRNAs on improperly translocated ribosomes. Binds to mitochondrial ribosomes in a GTP-dependent manner. The sequence is that of Translation factor GUF1, mitochondrial from Candida dubliniensis (strain CD36 / ATCC MYA-646 / CBS 7987 / NCPF 3949 / NRRL Y-17841) (Yeast).